Consider the following 293-residue polypeptide: MNIQEMILTLQNHWSEHNCILMQAYDTEKGAGTMSPMTLLRSLGPEPWNVAYVEPSRRPDDGRYGENPNRLYQHHQFQVIMKPSPDNIQELYLESLKKLGINPLEHDIRFVEDNWENPTLGAAGLGWEVWLDGMEITQFTYFQQIGGLEANPVTVELTYGIERLASYIQDKENVFDLEWNNGVTIRDIFYQPEYEHSTYTFKESNTDMLFDLFSMYEQEAKQTMEKGLVFPAYDYVLKCSHTFNLLDAKGVISVTERTGYIARIRNLARSISKIYVSEREKLGFPMLQEKGAK.

It belongs to the class-II aminoacyl-tRNA synthetase family. In terms of assembly, tetramer of two alpha and two beta subunits.

The protein localises to the cytoplasm. It catalyses the reaction tRNA(Gly) + glycine + ATP = glycyl-tRNA(Gly) + AMP + diphosphate. This Oceanobacillus iheyensis (strain DSM 14371 / CIP 107618 / JCM 11309 / KCTC 3954 / HTE831) protein is Glycine--tRNA ligase alpha subunit.